We begin with the raw amino-acid sequence, 184 residues long: GMP synthase [glutamine-hydrolyzing] subunit A (184 aa).

In terms of domain architecture, Glutamine amidotransferase type-1 spans 3-184; that stretch reads RIVVVDNHGQ…ENFRDICAGD (182 aa). The active-site Nucleophile is C73. Active-site residues include H161 and E163.

In terms of assembly, heterodimer composed of a glutamine amidotransferase subunit (A) and a GMP-binding subunit (B).

It carries out the reaction XMP + L-glutamine + ATP + H2O = GMP + L-glutamate + AMP + diphosphate + 2 H(+). It functions in the pathway purine metabolism; GMP biosynthesis; GMP from XMP (L-Gln route): step 1/1. Functionally, catalyzes the synthesis of GMP from XMP. This Natronomonas pharaonis (strain ATCC 35678 / DSM 2160 / CIP 103997 / JCM 8858 / NBRC 14720 / NCIMB 2260 / Gabara) (Halobacterium pharaonis) protein is GMP synthase [glutamine-hydrolyzing] subunit A.